The chain runs to 207 residues: Probable glutathione S-transferase 5 (207 aa).

A GST N-terminal domain is found at 2 to 81 (VSYKLTYFNG…FLAREFKLNG (80 aa)). Glutathione is bound by residues tyrosine 8, tryptophan 39, lysine 43, 51–53 (GQL), and 65–66 (QS). Residues 83 to 207 (TAWEEAQVNS…WIETRPVTPF (125 aa)) form the GST C-terminal domain.

This sequence belongs to the GST superfamily. Sigma family.

The catalysed reaction is RX + glutathione = an S-substituted glutathione + a halide anion + H(+). Its function is as follows. Conjugation of reduced glutathione to a wide number of exogenous and endogenous hydrophobic electrophiles. May play a role in the detoxification of reactive oxygen species produced during pathogenic bacterial infection. The protein is Probable glutathione S-transferase 5 (gst-5) of Caenorhabditis elegans.